A 309-amino-acid polypeptide reads, in one-letter code: GalNAc(5)-diNAcBac-PP-undecaprenol beta-1,3-glucosyltransferase (309 aa).

Residues 273 to 291 traverse the membrane as a helical segment; it reads SLSIKINAPALILLILSII.

The protein belongs to the glycosyltransferase 2 family.

It is found in the membrane. It catalyses the reaction [alpha-D-GalNAc-(1-&gt;4)]4-alpha-D-GalNAc-(1-&gt;3)-alpha-D-diNAcBac-tri-trans,hepta-cis-undecaprenyl diphosphate + UDP-alpha-D-glucose = [alpha-D-GalNAc-(1-&gt;4)]2-[beta-D-Glc-(1-&gt;3)]-[alpha-D-GalNAc-(1-&gt;4)]2-alpha-D-GalNAc-(1-&gt;3)-alpha-D-diNAcBac-tri-trans,hepta-cis-undecaprenyl diphosphate + UDP + H(+). It participates in protein modification; protein glycosylation. Its function is as follows. Glucosyltransferase that adds he final branching glucose to complete the final heptasaccharide structure in the N-linked protein glycosylation pathway. The polypeptide is GalNAc(5)-diNAcBac-PP-undecaprenol beta-1,3-glucosyltransferase (pglI) (Campylobacter jejuni subsp. jejuni serotype O:2 (strain ATCC 700819 / NCTC 11168)).